The sequence spans 1364 residues: Outer kinetochore KNL1 complex subunit spc7 (1364 aa).

The segment covering 1–15 has biased composition (polar residues); that stretch reads MPTSPRRNSIATTDN. Disordered stretches follow at residues 1-36, 124-190, and 202-223; these read MPTSPRRNSIATTDNVIGRNKSRKRPHSLGGPGALQ, YPKD…DIAS, and EALNAGHPPPSLYPENDDLSIQ. The span at 124–136 shows a compositional bias: basic and acidic residues; sequence YPKDHQSDSEKST. The segment covering 157-169 has biased composition (polar residues); the sequence is GPTTTSFSRNETQ. Residues 170 to 181 show a composition bias toward low complexity; sequence SSPHSHSASIIS. Residues 254-257 carry the MELT; degenerate motif; sequence MDLT. Phosphothreonine; by mph1 is present on Thr-257. The tract at residues 289-334 is disordered; that stretch reads ASHDPSNQTQLSSPNKSSSPTSIEISDFSKNNENHDQSENKEEEED. A compositionally biased stretch (low complexity) spans 300 to 310; the sequence is SSPNKSSSPTS. The segment covering 318 to 328 has biased composition (basic and acidic residues); it reads KNNENHDQSEN. The MELT; degenerate motif lies at 450–453; the sequence is MDLT. Thr-453 carries the phosphothreonine; by mph1 modification. The segment at 456 to 503 is disordered; sequence ISSTNAPTHLNEDDLNQFTSNISSSSKPRKDNNKTANSSKPIPDSEDF. A compositionally biased stretch (polar residues) spans 471 to 481; it reads NQFTSNISSSS. The short motif at 504–507 is the MELT; degenerate element; that stretch reads MDIT. The residue at position 507 (Thr-507) is a Phosphothreonine; by mph1. Disordered regions lie at residues 564-643 and 697-837; these read LPSA…SSFD and GATP…GVSN. Basic and acidic residues predominate over residues 566–585; the sequence is SADKENAEREEIPSYSDKSE. Over residues 586-617 the composition is skewed to polar residues; it reads NFNTTSFTNHERSPNGNNNLKFSKDPNSSSPS. The segment covering 719 to 730 has biased composition (basic and acidic residues); sequence EVSRQPTDDKGE. Residues 747 to 773 are compositionally biased toward polar residues; sequence LTIQQTNEIKHVPTNTTSSVKLPQQPS. Positions 791-802 are enriched in basic and acidic residues; it reads SLERLESQEPNR. The span at 808-820 shows a compositional bias: polar residues; the sequence is VGSSNAGNTTSVG. A coiled-coil region spans residues 1075–1155; it reads LAQAQEKLEK…EEQLLNLKNE (81 aa). The Nuclear localization signal motif lies at 1091–1105; that stretch reads RRRRLLSEKEERRKE.

In terms of assembly, component of the KNL1/SPC105 complex composed of at least spc7 and sos7. Part of the outer kinetochore KMN network that includes the KNL1, MIS12 and NDC80 complexes. Interacts (via C-terminus) with sos7 (via C-terminus); the interaction is direct. Interacts (when phosphorylated on MELT motifs) with bub1 and bub3; to recruit the BUB1-BUB3 complex to the kinetochore. In terms of processing, phosphorylation of threonine residues in the MELT motifs by mph1/mps1 leads to recruitment of bub1 and bub3 to the kinetochore, and is required to maintain spindle assembly checkpoint signaling.

The protein localises to the nucleus. The protein resides in the chromosome. Its subcellular location is the centromere. It is found in the kinetochore. In terms of biological role, acts as a component of the outer kinetochore KNL1 complex that serves as a docking point for spindle assembly checkpoint components and mediates microtubule-kinetochore interactions. Kinetochores, consisting of a centromere-associated inner segment and a microtubule-contacting outer segment, play a crucial role in chromosome segregation by mediating the physical connection between centromeric DNA and spindle microtubules. The outer kinetochore is made up of the ten-subunit KMN network, comprising the MIS12, NDC80 and KNL1 complexes, and auxiliary microtubule-associated components; together they connect the outer kinetochore with the inner kinetochore, bind microtubules, and mediate interactions with mitotic checkpoint proteins that delay anaphase until chromosomes are bioriented on the spindle. Recruits the BUB1-BUB3 complex to kinetochores when phosphorylated by mph1/mps1, to support spindle assembly checkpoint signaling. Functions both in mitotic and in meiotic chromosome segregation. The sequence is that of Outer kinetochore KNL1 complex subunit spc7 from Schizosaccharomyces pombe (strain 972 / ATCC 24843) (Fission yeast).